A 95-amino-acid chain; its full sequence is Integration host factor subunit beta (95 aa).

It belongs to the bacterial histone-like protein family. Heterodimer of an alpha and a beta chain.

In terms of biological role, this protein is one of the two subunits of integration host factor, a specific DNA-binding protein that functions in genetic recombination as well as in transcriptional and translational control. This is Integration host factor subunit beta from Shewanella amazonensis (strain ATCC BAA-1098 / SB2B).